Reading from the N-terminus, the 306-residue chain is Ribonuclease H2 subunit B (306 aa).

Residues 232–285 form a disordered region; it reads LPDLSSPTPEPPVKKRRVSDAPVEADEDYTKYNSDNKSRKSNSKMTAAQKSLAK. The span at 259–269 shows a compositional bias: basic and acidic residues; the sequence is DYTKYNSDNKS.

The protein belongs to the RNase H2 subunit B family. The RNase H2 complex is a heterotrimer composed of the catalytic subunit RNASEH2A and the non-catalytic subunits RNASEH2B and RNASEH2C.

It localises to the nucleus. Non catalytic subunit of RNase H2, an endonuclease that specifically degrades the RNA of RNA:DNA hybrids. Participates in DNA replication, possibly by mediating the removal of lagging-strand Okazaki fragment RNA primers during DNA replication. Mediates the excision of single ribonucleotides from DNA:RNA duplexes. This is Ribonuclease H2 subunit B (rnaseh2b) from Xenopus laevis (African clawed frog).